The primary structure comprises 124 residues: NADH-quinone oxidoreductase subunit K (124 aa).

3 helical membrane passes run 28 to 48 (MEHG…GVMV), 52 to 72 (FLFM…AFIV), and 84 to 104 (IMFI…LAIL).

Belongs to the complex I subunit 4L family. In terms of assembly, NDH-1 is composed of 14 different subunits. Subunits NuoA, H, J, K, L, M, N constitute the membrane sector of the complex.

It localises to the cell inner membrane. The enzyme catalyses a quinone + NADH + 5 H(+)(in) = a quinol + NAD(+) + 4 H(+)(out). Functionally, NDH-1 shuttles electrons from NADH, via FMN and iron-sulfur (Fe-S) centers, to quinones in the respiratory chain. The immediate electron acceptor for the enzyme in this species is believed to be ubiquinone. Couples the redox reaction to proton translocation (for every two electrons transferred, four hydrogen ions are translocated across the cytoplasmic membrane), and thus conserves the redox energy in a proton gradient. This chain is NADH-quinone oxidoreductase subunit K, found in Psychrobacter sp. (strain PRwf-1).